Reading from the N-terminus, the 384-residue chain is tRNA(Met) cytidine acetate ligase (384 aa).

ATP-binding positions include 7–20, Gly101, Asn153, and Arg178; that span reads VAEYNPFHSGHEFL.

The protein belongs to the TmcAL family.

The protein localises to the cytoplasm. The enzyme catalyses cytidine(34) in elongator tRNA(Met) + acetate + ATP = N(4)-acetylcytidine(34) in elongator tRNA(Met) + AMP + diphosphate. Its function is as follows. Catalyzes the formation of N(4)-acetylcytidine (ac(4)C) at the wobble position of elongator tRNA(Met), using acetate and ATP as substrates. First activates an acetate ion to form acetyladenylate (Ac-AMP) and then transfers the acetyl group to tRNA to form ac(4)C34. This chain is tRNA(Met) cytidine acetate ligase, found in Lactobacillus delbrueckii subsp. bulgaricus (strain ATCC 11842 / DSM 20081 / BCRC 10696 / JCM 1002 / NBRC 13953 / NCIMB 11778 / NCTC 12712 / WDCM 00102 / Lb 14).